The following is a 270-amino-acid chain: Replication protein A 32 kDa subunit (270 aa).

Met1 is modified (N-acetylmethionine). 2 positions are modified to phosphoserine; by PRKDC: Ser4 and Ser8. A Phosphothreonine; by PRKDC modification is found at Thr21. Residues 22 to 41 form a disordered region; sequence QSPGGFGSPTPSQAEKKSRA. Position 23 is a phosphoserine; by CDK2 (Ser23). Position 29 is a phosphoserine; by CDK1 (Ser29). Position 33 is a phosphoserine; by PRKDC (Ser33). Glycyl lysine isopeptide (Lys-Gly) (interchain with G-Cter in ubiquitin) cross-links involve residues Lys37 and Lys38. The OB DNA-binding region spans 74–148; the sequence is VTIVGIIRHA…KSLVAFKIIP (75 aa). The segment at 187 to 270 is interaction with RAD52, TIPIN, UNG and XPA; the sequence is GMGEPGNFSG…DDHFKSTDAE (84 aa).

This sequence belongs to the replication factor A protein 2 family. In terms of assembly, component of the replication protein A complex (RPA/RP-A), a heterotrimeric complex composed of RPA1, RPA2 and RPA3. Interacts with PRPF19; the PRP19-CDC5L complex is recruited to the sites of DNA repair where it ubiquitinates the replication protein A complex (RPA). Interacts with SERTAD3. Interacts with TIPIN. Interacts with TIMELESS. Interacts with PPP4R2; the interaction is direct, DNA damage-dependent and mediates the recruitment of the PP4 catalytic subunit PPP4C. Interacts (hyperphosphorylated) with RAD51. Interacts with SMARCAL1; the interaction is direct and mediates the recruitment to the RPA complex of SMARCAL1. Interacts with RAD52 and XPA; those interactions are direct and associate RAD52 and XPA to the RPA complex. Interacts with FBH1. Interacts with ETAA1; the interaction is direct and promotes ETAA1 recruitment at stalled replication forks. Interacts with DDI2. Interacts (in unphosphorylated form via N-terminus) with EIF4EBP3; the interaction enhances EIF4EBP3-mediated inhibition of EIF4E-mediated mRNA nuclear export. Interacts with nuclear UNG (isoform 2); this interaction mediates UNG recruitment to RPA-coated single-stranded DNA at stalled replication forks. Post-translationally, differentially phosphorylated throughout the cell cycle, becoming phosphorylated at the G1-S transition and dephosphorylated in late mitosis. Mainly phosphorylated at Ser-23 and Ser-29, by cyclin A-CDK2 and cyclin B-CDK1, respectively during DNA replication and mitosis. Dephosphorylation may require the serine/threonine-protein phosphatase 4. Phosphorylation at Ser-23 and Ser-29 is a prerequisite for further phosphorylation. Becomes hyperphosphorylated on additional residues including Ser-4, Ser-8, Thr-21 and Ser-33 in response to DNA damage. Hyperphosphorylation is mediated by ATM, ATR and PRKDC. Primarily recruited to DNA repair nuclear foci as a hypophosphorylated form it undergoes subsequent hyperphosphorylation, catalyzed by ATR. Hyperphosphorylation is required for RAD51 recruitment to chromatin and efficient DNA repair. Phosphorylation at Thr-21 depends upon RFWD3 presence. In terms of processing, DNA damage-induced 'Lys-63'-linked polyubiquitination by PRPF19 mediates ATRIP recruitment to the RPA complex at sites of DNA damage and activation of ATR. Ubiquitinated by RFWD3 at stalled replication forks in response to DNA damage: ubiquitination by RFWD3 does not lead to degradation by the proteasome and promotes removal of the RPA complex from stalled replication forks, promoting homologous recombination.

It is found in the nucleus. Its subcellular location is the PML body. In terms of biological role, as part of the heterotrimeric replication protein A complex (RPA/RP-A), binds and stabilizes single-stranded DNA intermediates, that form during DNA replication or upon DNA stress. It prevents their reannealing and in parallel, recruits and activates different proteins and complexes involved in DNA metabolism. Thereby, it plays an essential role both in DNA replication and the cellular response to DNA damage. In the cellular response to DNA damage, the RPA complex controls DNA repair and DNA damage checkpoint activation. Through recruitment of ATRIP activates the ATR kinase a master regulator of the DNA damage response. It is required for the recruitment of the DNA double-strand break repair factors RAD51 and RAD52 to chromatin in response to DNA damage. Also recruits to sites of DNA damage proteins like XPA and XPG that are involved in nucleotide excision repair and is required for this mechanism of DNA repair. Also plays a role in base excision repair (BER) probably through interaction with UNG. Also recruits SMARCAL1/HARP, which is involved in replication fork restart, to sites of DNA damage. May also play a role in telomere maintenance. This chain is Replication protein A 32 kDa subunit (Rpa2), found in Rattus norvegicus (Rat).